Reading from the N-terminus, the 374-residue chain is Potassium channel subfamily K member 9 (374 aa).

Over 1-8 the chain is Cytoplasmic; that stretch reads MKRQNVRT. A helical membrane pass occupies residues 9–29; that stretch reads LSLIICTFTYLLVGAAVFDAL. Residues 30–88 lie on the Extracellular side of the membrane; sequence ESDYEMREEEKLKAEEIRLKGKYNISSEDYRQLELVIMQSEPHRAGVQWKFAGSFYFAI. Residue Asn53 is glycosylated (N-linked (GlcNAc...) asparagine). The segment at residues 89–101 is an intramembrane region (pore-forming); the sequence is TVITTIGYGHAAP. Over 102–107 the chain is Extracellular; that stretch reads GTDAGK. Residues 108–128 traverse the membrane as a helical segment; sequence AFCMFYAVLGIPLTLVMFQSL. Topologically, residues 129-158 are cytoplasmic; that stretch reads GERMNTFVKYLLKRIKKCCGMHSTDVSMEN. Residues 159-179 form a helical membrane-spanning segment; sequence MVTVGFFSCMGTLCIGAAAFS. Topologically, residues 180–194 are extracellular; sequence HYEEWSFFQAYYYCF. An intramembrane region (pore-forming) is located at residues 195–207; the sequence is ITLTTIGFGDYVA. The Extracellular segment spans residues 208 to 218; the sequence is LQKNRALQKKP. The chain crosses the membrane as a helical span at residues 219 to 239; the sequence is LYVAFSFMYILVGLTVIGAFL. Residues 240 to 374 lie on the Cytoplasmic side of the membrane; it reads NLVVLRFLTM…HRLMKRRKSI (135 aa).

This sequence belongs to the two pore domain potassium channel (TC 1.A.1.8) family. In terms of assembly, homodimer. May form heterodimers with other family members.

It is found in the cell membrane. Functionally, pH-dependent, voltage-insensitive, background potassium channel protein. This chain is Potassium channel subfamily K member 9 (kcnk9), found in Xenopus laevis (African clawed frog).